The chain runs to 301 residues: 3-dehydroquinate dehydratase (301 aa).

The tract at residues 1–221 (MLQYGVLICG…YYAALLALGI (221 aa)) is 3-dehydroquinate dehydratase. Residues 32–34 (ELR) and arginine 63 each bind 3-dehydroquinate. Histidine 119 acts as the Proton donor/acceptor in catalysis. Residue lysine 145 is the Schiff-base intermediate with substrate of the active site. Positions 183, 202, and 206 each coordinate 3-dehydroquinate. In terms of domain architecture, Chorismate mutase spans 222–301 (TPSGGGLPAL…QMCKAVQLVA (80 aa)).

The protein belongs to the type-I 3-dehydroquinase family. As to quaternary structure, homodimer.

It carries out the reaction 3-dehydroquinate = 3-dehydroshikimate + H2O. It functions in the pathway metabolic intermediate biosynthesis; chorismate biosynthesis; chorismate from D-erythrose 4-phosphate and phosphoenolpyruvate: step 3/7. In terms of biological role, involved in the third step of the chorismate pathway, which leads to the biosynthesis of aromatic amino acids. Catalyzes the cis-dehydration of 3-dehydroquinate (DHQ) and introduces the first double bond of the aromatic ring to yield 3-dehydroshikimate. This Pyrobaculum aerophilum (strain ATCC 51768 / DSM 7523 / JCM 9630 / CIP 104966 / NBRC 100827 / IM2) protein is 3-dehydroquinate dehydratase.